The sequence spans 305 residues: Tetraspanin-12 (305 aa).

At 1 to 12 (MAREDSVKCLRC) the chain is on the cytoplasmic side. S-palmitoyl cysteine attachment occurs at residues C9 and C12. A helical membrane pass occupies residues 13–33 (LLYALNLLFWLMSISVLAVSA). Topologically, residues 34 to 59 (WMRDYLNNVLTLTAETRVEEAVILTY) are extracellular. Residues 60–80 (FPVVHPVMIAVCCFLIIVGML) form a helical membrane-spanning segment. Topologically, residues 81–89 (GYCGTVKRN) are cytoplasmic. C83 carries S-palmitoyl cysteine lipidation. The helical transmembrane segment at 90 to 110 (LLLLAWYFGSLLVIFCVELAC) threads the bilayer. Residues 111–224 (GVWTYEQELM…RGTKQLQVLR (114 aa)) are Extracellular-facing. A helical transmembrane segment spans residues 225 to 245 (FLGISIGVTQILAMILTITLL). The Cytoplasmic segment spans residues 246 to 305 (WALYYDRREPGTDQMMSLKNDNSQHLSCPSVELLKPSLSRIFEHTSMANSFNTHFEMEEL).

It belongs to the tetraspanin (TM4SF) family. In terms of assembly, component of a complex, at least composed of TSPAN12, FZD4 and norrin (NDP). Interacts (when palmitoylated) with ADAM10. Interacts with MMP14/MT1-MMP. In terms of processing, palmitoylated; required for interaction with ADAM10. The precise position of palmitoylated residues is unclear and occurs either on Cys-9, Cys-12 and/or Cys-83.

The protein localises to the cell membrane. Functionally, regulator of cell surface receptor signal transduction. Plays a central role in retinal vascularization by regulating norrin (NDP) signal transduction. Acts in concert with norrin (NDP) to promote FZD4 multimerization and subsequent activation of FZD4, leading to promote accumulation of beta-catenin (CTNNB1) and stimulate LEF/TCF-mediated transcriptional programs. Suprisingly, it only activates the norrin (NDP)-dependent activation of FZD4, while it does not activate the Wnt-dependent activation of FZD4, suggesting the existence of a Wnt-independent signaling that also promote accumulation the beta-catenin (CTNNB1). Acts as a regulator of membrane proteinases such as ADAM10 and MMP14/MT1-MMP. Activates ADAM10-dependent cleavage activity of amyloid precursor protein (APP). Activates MMP14/MT1-MMP-dependent cleavage activity. This Homo sapiens (Human) protein is Tetraspanin-12 (TSPAN12).